The primary structure comprises 281 residues: 4-diphosphocytidyl-2-C-methyl-D-erythritol kinase (281 aa).

Lys15 is a catalytic residue. 98 to 108 (PTGAGLGGGSS) provides a ligand contact to ATP. Asp140 is a catalytic residue.

Belongs to the GHMP kinase family. IspE subfamily.

It carries out the reaction 4-CDP-2-C-methyl-D-erythritol + ATP = 4-CDP-2-C-methyl-D-erythritol 2-phosphate + ADP + H(+). It participates in isoprenoid biosynthesis; isopentenyl diphosphate biosynthesis via DXP pathway; isopentenyl diphosphate from 1-deoxy-D-xylulose 5-phosphate: step 3/6. Functionally, catalyzes the phosphorylation of the position 2 hydroxy group of 4-diphosphocytidyl-2C-methyl-D-erythritol. The protein is 4-diphosphocytidyl-2-C-methyl-D-erythritol kinase of Neisseria meningitidis serogroup A / serotype 4A (strain DSM 15465 / Z2491).